A 505-amino-acid chain; its full sequence is Histidine ammonia-lyase (505 aa).

Residues 141 to 143 (ASG) constitute a cross-link (5-imidazolinone (Ala-Gly)). Position 142 is a 2,3-didehydroalanine (Ser) (serine 142).

Belongs to the PAL/histidase family. Contains an active site 4-methylidene-imidazol-5-one (MIO), which is formed autocatalytically by cyclization and dehydration of residues Ala-Ser-Gly.

Its subcellular location is the cytoplasm. It catalyses the reaction L-histidine = trans-urocanate + NH4(+). It participates in amino-acid degradation; L-histidine degradation into L-glutamate; N-formimidoyl-L-glutamate from L-histidine: step 1/3. The polypeptide is Histidine ammonia-lyase (Bacillus mycoides (strain KBAB4) (Bacillus weihenstephanensis)).